Reading from the N-terminus, the 61-residue chain is Prophage outer membrane lipoprotein RzoR (61 aa).

The first 19 residues, 1–19, serve as a signal peptide directing secretion; that stretch reads MRKLKMMLCVMMLPLVVVG. The N-palmitoyl cysteine moiety is linked to residue cysteine 20. Cysteine 20 carries S-diacylglycerol cysteine lipidation.

The protein belongs to the lambdalikevirus o-spanin family. Homodimer; disulfide-linked. Interacts (via C-terminus) with RZ (via C-terminus). Part of the spanin complex which spans the entire periplasmic space. The spanin complex is composed of spanin, inner membrane subunit and spanin, outer membrane subunit.

It is found in the cell outer membrane. Its function is as follows. Component of the spanin complex that disrupts the outer membrane and causes cell lysis during virus exit. The spanin complex conducts the final step in cell lysis by disrupting the outer membrane after holin and endolysin action have permeabilized the inner membrane and degraded the host peptidoglycans. This chain is Prophage outer membrane lipoprotein RzoR (rzoR), found in Escherichia coli (strain K12).